A 553-amino-acid chain; its full sequence is Neutral amino acid transporter B(0) (553 aa).

M1 is modified (N-acetylmethionine). At 1–50 (MAVDPPKADPKGVAVDSSRRCPALGSREDQSAKAGGCCGSRDRVRRCIRA) the chain is on the cytoplasmic side. A helical transmembrane segment spans residues 51–80 (NLLVLLTVAAVVAGVGLGLGVSAAGGADAL). The Extracellular segment spans residues 81 to 93 (GPARLTRFAFPGE). The helical transmembrane segment at 94–115 (LLLRLLKMIILPLVVCSLIGGA) threads the bilayer. The Cytoplasmic segment spans residues 116–129 (ASLDPSALGRVGAW). Residues 130–152 (ALLFFLVTTLLASALGVGLALAL) form a helical membrane-spanning segment. The Extracellular portion of the chain corresponds to 153-236 (KPGAAVTAIT…INSTMVQLLC (84 aa)). Residues N165 and N228 are each glycosylated (N-linked (GlcNAc...) asparagine). Residues 237-260 (EVEGMNILGLVVFAIVFGVALRKL) traverse the membrane as a helical segment. Residues 261 to 269 (GPEGELLIR) are Cytoplasmic-facing. A helical transmembrane segment spans residues 270-297 (FFNSFNDATMVLVSWIMWYAPVGILFLV). Residues 298–318 (ASKIVEMKDVRQLFISLGKYI) lie on the Extracellular side of the membrane. The chain crosses the membrane as a helical span at residues 319 to 340 (LCCLLGHAIHGLLVLPLIYFLF). Residues 341–345 (TRKNP) lie on the Cytoplasmic side of the membrane. Positions 346-376 (YRFLWGIMTPLATAFGTSSSSATLPLMMKCV) form an intramembrane region, discontinuously helical. Residues 377-385 (EEKNGVAKH) lie on the Cytoplasmic side of the membrane. The chain crosses the membrane as a helical span at residues 386–412 (ISRFILPIGATVNMDGAALFQCVAAVF). The Na(+) site is built by G394, T396, and N398. The Extracellular segment spans residues 413–425 (IAQLNGVSLDFVK). Positions 426–459 (IITILVTATASSVGAAGIPAGGVLTLAIILEAVS) form an intramembrane region, discontinuously helical. The Extracellular segment spans residues 460 to 472 (LPVKDISLILAVD). Residues 473–494 (WLVDRSCTVLNVEGDAFGAGLL) traverse the membrane as a helical segment. N483 and D487 together coordinate Na(+). At 495 to 553 (QSYVDRTKMPSSEPELIQVKNEVSLNPLPLATEEGNPLLKQYQGPTGDSSATFEKESVM) the chain is on the cytoplasmic side. A phosphoserine mark is found at S505, S506, S518, S543, and S551. The tract at residues 531-553 (PLLKQYQGPTGDSSATFEKESVM) is disordered. Over residues 537–546 (QGPTGDSSAT) the composition is skewed to polar residues.

It belongs to the dicarboxylate/amino acid:cation symporter (DAACS) (TC 2.A.23) family. SLC1A5 subfamily. Homotrimer. As to expression, highly expressed in adipose tissue. Detected in lung, skeletal muscle, large intestine, kidney and testis. Expressed in lung, brain, kidney and neural retina (at protein level). Expressed in Mueller cells (at protein level).

The protein localises to the cell membrane. It localises to the melanosome. It carries out the reaction L-glutamine(out) + L-serine(in) + Na(+)(out) = L-glutamine(in) + L-serine(out) + Na(+)(in). The enzyme catalyses L-glutamine(in) + L-serine(out) + Na(+)(out) = L-glutamine(out) + L-serine(in) + Na(+)(in). The catalysed reaction is L-threonine(in) + L-glutamine(out) + Na(+)(out) = L-threonine(out) + L-glutamine(in) + Na(+)(in). It catalyses the reaction L-threonine(out) + L-glutamine(in) + Na(+)(out) = L-threonine(in) + L-glutamine(out) + Na(+)(in). It carries out the reaction L-asparagine(in) + L-glutamine(out) + Na(+)(out) = L-asparagine(out) + L-glutamine(in) + Na(+)(in). The enzyme catalyses L-asparagine(out) + L-glutamine(in) + Na(+)(out) = L-asparagine(in) + L-glutamine(out) + Na(+)(in). The catalysed reaction is L-glutamine(in) + L-alanine(out) + Na(+)(out) = L-glutamine(out) + L-alanine(in) + Na(+)(in). It catalyses the reaction L-valine(out) + L-glutamine(in) + Na(+)(out) = L-valine(in) + L-glutamine(out) + Na(+)(in). It carries out the reaction L-glutamine(in) + L-methionine(out) + Na(+)(out) = L-glutamine(out) + L-methionine(in) + Na(+)(in). The enzyme catalyses L-glutamine(in) + L-glutamate(out) + Na(+)(out) + H(+)(out) = L-glutamine(out) + L-glutamate(in) + Na(+)(in) + H(+)(in). The catalysed reaction is D-serine(in) + L-glutamine(out) + Na(+)(out) = D-serine(out) + L-glutamine(in) + Na(+)(in). It catalyses the reaction D-serine(in) + L-alanine(out) + Na(+)(out) = D-serine(out) + L-alanine(in) + Na(+)(in). It carries out the reaction nitrate(in) = nitrate(out). The enzyme catalyses iodide(out) = iodide(in). The catalysed reaction is thiocyanate(in) = thiocyanate(out). Its activity is regulated as follows. Down-regulated at acidic pH, with the exception of L-glutamate transport which is up-regulated instead. Its function is as follows. Sodium-coupled antiporter of neutral amino acids. In a tri-substrate transport cycle, exchanges neutral amino acids between the extracellular and intracellular compartments, coupled to the inward cotransport of at least one sodium ion. The preferred substrate is the essential amino acid L-glutamine, a precursor for biosynthesis of proteins, nucleotides and amine sugars as well as an alternative fuel for mitochondrial oxidative phosphorylation. Exchanges L-glutamine with other neutral amino acids such as L-serine, L-threonine and L-asparagine in a bidirectional way. Provides L-glutamine to proliferating stem and activated cells driving the metabolic switch toward cell differentiation. The transport cycle is usually pH-independent, with the exception of L-glutamate. Transports extracellular L-glutamate coupled to the cotransport of one proton and one sodium ion in exchange for intracellular L-glutamine counter-ion. May provide for L-glutamate uptake in glial cells regulating glutamine/glutamate cycle in the nervous system. Can transport D-amino acids. Mediates D-serine release from the retinal glia potentially affecting NMDA receptor function in retinal neurons. Displays sodium- and amino acid-dependent but uncoupled channel-like anion conductance with a preference SCN(-) &gt;&gt; NO3(-) &gt; I(-) &gt; Cl(-). Through binding of the fusogenic protein syncytin-1/ERVW-1 may mediate trophoblasts syncytialization, the spontaneous fusion of their plasma membranes, an essential process in placental development. The chain is Neutral amino acid transporter B(0) (Slc1a5) from Mus musculus (Mouse).